The sequence spans 894 residues: Protein translocase subunit SecA (894 aa).

ATP contacts are provided by residues Q87, 105-109 (GEGKT), and D512. The disordered stretch occupies residues 836–870 (EVEQAERERQAHAEQESSHYHAEGEGQDFSDLHIG). Zn(2+)-binding residues include C875, C877, C886, and H887.

The protein belongs to the SecA family. In terms of assembly, monomer and homodimer. Part of the essential Sec protein translocation apparatus which comprises SecA, SecYEG and auxiliary proteins SecDF-YajC and YidC. It depends on Zn(2+) as a cofactor.

The protein resides in the cell inner membrane. It localises to the cytoplasm. The catalysed reaction is ATP + H2O + cellular proteinSide 1 = ADP + phosphate + cellular proteinSide 2.. In terms of biological role, part of the Sec protein translocase complex. Interacts with the SecYEG preprotein conducting channel. Has a central role in coupling the hydrolysis of ATP to the transfer of proteins into and across the cell membrane, serving both as a receptor for the preprotein-SecB complex and as an ATP-driven molecular motor driving the stepwise translocation of polypeptide chains across the membrane. The polypeptide is Protein translocase subunit SecA (Glaesserella parasuis serovar 5 (strain SH0165) (Haemophilus parasuis)).